Consider the following 154-residue polypeptide: Myoglobin (154 aa).

A Globin domain is found at glycine 2–lysine 148. Phosphoserine is present on serine 4. Histidine 65 is a binding site for nitrite. Histidine 65 provides a ligand contact to O2. At threonine 68 the chain carries Phosphothreonine. Residue histidine 94 participates in heme b binding.

The protein belongs to the globin family. As to quaternary structure, monomeric.

It is found in the cytoplasm. Its subcellular location is the sarcoplasm. The enzyme catalyses Fe(III)-heme b-[protein] + nitric oxide + H2O = Fe(II)-heme b-[protein] + nitrite + 2 H(+). It carries out the reaction H2O2 + AH2 = A + 2 H2O. Its function is as follows. Monomeric heme protein which primary function is to store oxygen and facilitate its diffusion within muscle tissues. Reversibly binds oxygen through a pentacoordinated heme iron and enables its timely and efficient release as needed during periods of heightened demand. Depending on the oxidative conditions of tissues and cells, and in addition to its ability to bind oxygen, it also has a nitrite reductase activity whereby it regulates the production of bioactive nitric oxide. Under stress conditions, like hypoxia and anoxia, it also protects cells against reactive oxygen species thanks to its pseudoperoxidase activity. The protein is Myoglobin (MB) of Lepilemur mustelinus (Weasel sportive lemur).